A 354-amino-acid polypeptide reads, in one-letter code: Putative F-box/kelch-repeat protein At5g03000 (354 aa).

Residues 37 to 86 form the F-box domain; that stretch reads PTVFSSLPDELILNCLARVSRFYRPSLSLVNKEFQSLIASPDLEATRSRI. Kelch repeat units follow at residues 143–189 and 190–236; these read EIYI…VIDG and KIYV…FPGK.

The polypeptide is Putative F-box/kelch-repeat protein At5g03000 (Arabidopsis thaliana (Mouse-ear cress)).